Reading from the N-terminus, the 908-residue chain is Glutamate receptor ionotropic, kainate 2 (908 aa).

Positions 1–31 are cleaved as a signal peptide; that stretch reads MKIISPVLSNLVFSRSIKVLLCLLWIGYSQG. The Extracellular segment spans residues 32–561; the sequence is TTHVLRFGGI…VFSFLNPLSP (530 aa). Asn-67, Asn-73, Asn-275, Asn-378, Asn-412, Asn-423, and Asn-430 each carry an N-linked (GlcNAc...) asparagine glycan. An intrachain disulfide couples Cys-96 to Cys-347. Pro-516, Ala-518, and Arg-523 together coordinate L-glutamate. A glycan (N-linked (GlcNAc...) asparagine) is linked at Asn-546. Residues 562-582 form a helical membrane-spanning segment; it reads DIWMYILLAYLGVSCVLFVIA. Over 583-638 the chain is Cytoplasmic; that stretch reads RFSPYEWYNPHPCNPDSDVVENNFTLLNSFWFGVGALMQQGSELMPKALSTRIVGG. The helical transmembrane segment at 639 to 659 threads the bilayer; it reads IWWFFTLIIISSYTANLAAFL. The Extracellular segment spans residues 660–819; the sequence is TVERMESPID…KEASALGVQN (160 aa). L-glutamate is bound by residues Ala-689, Thr-690, and Glu-738. Cys-750 and Cys-804 are joined by a disulfide. Asn-751 carries an N-linked (GlcNAc...) asparagine glycan. A helical membrane pass occupies residues 820 to 840; it reads IGGIFIVLAAGLVLSVFVAVG. Residues 841 to 908 lie on the Cytoplasmic side of the membrane; it reads EFLYKSKKNA…RRLPGKETMA (68 aa). A phosphoserine; by PKC mark is found at Ser-846 and Ser-868. A Glycyl lysine isopeptide (Lys-Gly) (interchain with G-Cter in SUMO1) cross-link involves residue Lys-886.

This sequence belongs to the glutamate-gated ion channel (TC 1.A.10.1) family. GRIK2 subfamily. As to quaternary structure, homotetramer and heterotetramer with GRIK5. Tetramers may be formed by the dimerization of dimers. Assembles into a kainate-gated homomeric channel that does not bind AMPA. Can form functional heteromeric receptors with GRIK3. Forms a heteromeric complex with GRIK4 and GRIK5. Interacts with DLG4. Interacts (via C-terminus) with KLHL17 (via kelch repeats); the interaction targets GRIK2 for degradation via ubiquitin-proteasome pathway. Interacts with NETO2. Sumoylation mediates kainate receptor-mediated endocytosis and regulates synaptic transmission. Sumoylation is enhanced by PIAS3 and desumoylated by SENP1. In terms of processing, ubiquitinated. Ubiquitination regulates the GRIK2 levels at the synapse by leading kainate receptor degradation through proteasome. Post-translationally, phosphorylated by PKC at Ser-868 upon agonist activation, this directly enhance sumoylation. In terms of tissue distribution, expressed in the hippocampal mossy fiber synapses (at protein level). Most abundant in the cerebellum and the hypothalamus. Expressed in a proportion of dorsal root ganglion (DRG) neurons (13.6%); predominantly small diameter DRG neurons (75%) with the remainder expressed in medium diameter DRG neurons.

The protein resides in the cell membrane. It localises to the postsynaptic cell membrane. The enzyme catalyses Ca(2+)(in) = Ca(2+)(out). It carries out the reaction Na(+)(in) = Na(+)(out). With respect to regulation, cold receptor activity activated by temperatures between 10-19 degrees Celsius. Its function is as follows. Ionotropic glutamate receptor that functions as a cation-permeable ligand-gated ion channel, gated by L-glutamate and the glutamatergic agonist kainic acid. L-glutamate acts as an excitatory neurotransmitter at many synapses in the central nervous system. Binding of the excitatory neurotransmitter L-glutamate induces a conformation change, leading to the opening of the cation channel, and thereby converts the chemical signal to an electrical impulse. The receptor then desensitizes rapidly and enters a transient inactive state, characterized by the presence of bound agonist. Modulates cell surface expression of NETO2. In association with GRIK3, involved in presynaptic facilitation of glutamate release at hippocampal mossy fiber synapses. Independent of its ionotropic glutamate receptor activity, acts as a thermoreceptor conferring sensitivity to cold temperatures. Functions in dorsal root ganglion neurons. Functionally, ionotropic glutamate receptor that functions as a cation-permeable ligand-gated ion channel, gated by L-glutamate and the glutamatergic agonist kainic acid. The sequence is that of Glutamate receptor ionotropic, kainate 2 (Grik2) from Mus musculus (Mouse).